The primary structure comprises 133 residues: Small ribosomal subunit protein uS11 (133 aa).

The tract at residues 1–23 (MPPKTRGAVRKPRKKDKKNIALG) is disordered. Positions 7-17 (GAVRKPRKKDK) are enriched in basic residues.

It belongs to the universal ribosomal protein uS11 family. Part of the 30S ribosomal subunit. Interacts with proteins S7 and S18. Binds to IF-3.

In terms of biological role, located on the platform of the 30S subunit, it bridges several disparate RNA helices of the 16S rRNA. Forms part of the Shine-Dalgarno cleft in the 70S ribosome. This Pseudarthrobacter chlorophenolicus (strain ATCC 700700 / DSM 12829 / CIP 107037 / JCM 12360 / KCTC 9906 / NCIMB 13794 / A6) (Arthrobacter chlorophenolicus) protein is Small ribosomal subunit protein uS11.